The primary structure comprises 425 residues: Oxytetracycline polyketide putative beta-ketoacyl synthase 1 (425 aa).

A Ketosynthase family 3 (KS3) domain is found at 7–420 (ARRVVITGIG…GFQSAIVLTE (414 aa)). Active-site for beta-ketoacyl synthase activity residues include Cys173, His313, and His350.

It belongs to the thiolase-like superfamily. Beta-ketoacyl-ACP synthases family.

It functions in the pathway antibiotic biosynthesis; oxytetracycline biosynthesis. This Streptomyces rimosus protein is Oxytetracycline polyketide putative beta-ketoacyl synthase 1.